The primary structure comprises 419 residues: uncharacterized protein (419 aa).

Residues 29-236 enclose the Obg domain; sequence PKFQDKIRIR…KLIELELKTI (208 aa). The OBG-type G domain occupies 237–414; the sequence is CEIGLVGLPN…LVRGMTQLLQ (178 aa). Residues 243-250, 295-299, and 364-367 each bind GTP; these read GLPNAGKS, DIPGI, and ANKA.

Belongs to the TRAFAC class OBG-HflX-like GTPase superfamily. OBG GTPase family.

The protein localises to the mitochondrion. This is an uncharacterized protein from Schizosaccharomyces pombe (strain 972 / ATCC 24843) (Fission yeast).